The chain runs to 242 residues: Small ribosomal subunit protein uS2 (242 aa).

This sequence belongs to the universal ribosomal protein uS2 family.

This chain is Small ribosomal subunit protein uS2, found in Tolumonas auensis (strain DSM 9187 / NBRC 110442 / TA 4).